A 116-amino-acid chain; its full sequence is Large ribosomal subunit protein uL22 (116 aa).

This sequence belongs to the universal ribosomal protein uL22 family. As to quaternary structure, part of the 50S ribosomal subunit.

In terms of biological role, this protein binds specifically to 23S rRNA; its binding is stimulated by other ribosomal proteins, e.g. L4, L17, and L20. It is important during the early stages of 50S assembly. It makes multiple contacts with different domains of the 23S rRNA in the assembled 50S subunit and ribosome. Its function is as follows. The globular domain of the protein is located near the polypeptide exit tunnel on the outside of the subunit, while an extended beta-hairpin is found that lines the wall of the exit tunnel in the center of the 70S ribosome. This chain is Large ribosomal subunit protein uL22, found in Orientia tsutsugamushi (strain Boryong) (Rickettsia tsutsugamushi).